The sequence spans 173 residues: Putative 4-hydroxy-4-methyl-2-oxoglutarate aldolase (173 aa).

Substrate-binding positions include Gly-89–Leu-92 and Arg-111. Asp-112 contributes to the a divalent metal cation binding site.

It belongs to the class II aldolase/RraA-like family. Homotrimer. A divalent metal cation serves as cofactor.

It carries out the reaction 4-hydroxy-4-methyl-2-oxoglutarate = 2 pyruvate. The enzyme catalyses oxaloacetate + H(+) = pyruvate + CO2. Functionally, catalyzes the aldol cleavage of 4-hydroxy-4-methyl-2-oxoglutarate (HMG) into 2 molecules of pyruvate. Also contains a secondary oxaloacetate (OAA) decarboxylase activity due to the common pyruvate enolate transition state formed following C-C bond cleavage in the retro-aldol and decarboxylation reactions. In Albidiferax ferrireducens (strain ATCC BAA-621 / DSM 15236 / T118) (Rhodoferax ferrireducens), this protein is Putative 4-hydroxy-4-methyl-2-oxoglutarate aldolase.